We begin with the raw amino-acid sequence, 252 residues long: 5-oxoprolinase subunit A (252 aa).

This sequence belongs to the LamB/PxpA family. In terms of assembly, forms a complex composed of PxpA, PxpB and PxpC.

It carries out the reaction 5-oxo-L-proline + ATP + 2 H2O = L-glutamate + ADP + phosphate + H(+). Catalyzes the cleavage of 5-oxoproline to form L-glutamate coupled to the hydrolysis of ATP to ADP and inorganic phosphate. This is 5-oxoprolinase subunit A from Mycolicibacterium paratuberculosis (strain ATCC BAA-968 / K-10) (Mycobacterium paratuberculosis).